Consider the following 112-residue polypeptide: Virion protein 6 (112 aa).

The protein localises to the virion. The chain is Virion protein 6 from Enterococcus phage phiEF24C (Enterococcus bacteriophage phi-EF24C).